Reading from the N-terminus, the 231-residue chain is Heptaprenylglyceryl phosphate synthase (231 aa).

Lys12 is a binding site for sn-glycerol 1-phosphate. Mg(2+)-binding residues include Asp14 and Thr40. Residues 159–164 (YMEYSG), Gly189, and 209–210 (GN) contribute to the sn-glycerol 1-phosphate site.

The protein belongs to the GGGP/HepGP synthase family. Group I subfamily. Homodimer. The cofactor is Mg(2+).

The enzyme catalyses sn-glycerol 1-phosphate + all-trans-heptaprenyl diphosphate = 3-heptaprenyl-sn-glycero-1-phosphate + diphosphate. Its pathway is membrane lipid metabolism; glycerophospholipid metabolism. Functionally, prenyltransferase that catalyzes in vivo the transfer of the heptaprenyl moiety of heptaprenyl pyrophosphate (HepPP; 35 carbon atoms) to the C3 hydroxyl of sn-glycerol-1-phosphate (G1P), producing heptaprenylglyceryl phosphate (HepGP). This reaction is an ether-bond-formation step in the biosynthesis of archaea-type G1P-based membrane lipids found in Bacillales. In Anoxybacillus flavithermus (strain DSM 21510 / WK1), this protein is Heptaprenylglyceryl phosphate synthase.